A 109-amino-acid chain; its full sequence is Large ribosomal subunit protein uL23 (109 aa).

It belongs to the universal ribosomal protein uL23 family. In terms of assembly, part of the 50S ribosomal subunit. Contacts protein L29, and trigger factor when it is bound to the ribosome.

Functionally, one of the early assembly proteins it binds 23S rRNA. One of the proteins that surrounds the polypeptide exit tunnel on the outside of the ribosome. Forms the main docking site for trigger factor binding to the ribosome. The sequence is that of Large ribosomal subunit protein uL23 from Prosthecochloris aestuarii (strain DSM 271 / SK 413).